Here is a 306-residue protein sequence, read N- to C-terminus: Agmatinase (306 aa).

Positions 126, 149, 151, 153, 230, and 232 each coordinate Mn(2+).

It belongs to the arginase family. Agmatinase subfamily. Requires Mn(2+) as cofactor.

The catalysed reaction is agmatine + H2O = urea + putrescine. Its pathway is amine and polyamine biosynthesis; putrescine biosynthesis via agmatine pathway; putrescine from agmatine: step 1/1. Functionally, catalyzes the formation of putrescine from agmatine. The chain is Agmatinase from Cronobacter sakazakii (strain ATCC BAA-894) (Enterobacter sakazakii).